Reading from the N-terminus, the 94-residue chain is Integration host factor subunit beta (94 aa).

It belongs to the bacterial histone-like protein family. Heterodimer of an alpha and a beta chain.

Functionally, this protein is one of the two subunits of integration host factor, a specific DNA-binding protein that functions in genetic recombination as well as in transcriptional and translational control. The sequence is that of Integration host factor subunit beta from Pseudomonas paraeruginosa (strain DSM 24068 / PA7) (Pseudomonas aeruginosa (strain PA7)).